The sequence spans 170 residues: MVHAFLIHTLRAPNLEDTGLCRVLYSCVFGAEKSPDDPRSHGAERDRLFRKEQILAVARQVESLCRLQQQAAGCSSTDLQPQFSAEPVSLHEAPHGAFHLAAGDPFQEPRTVLWLGILSLGFALVLDTHENLLLAERTLRLLARLLLDHLRLLTPAVSTGAAYCRAHPSR.

Probably part of the adaptor protein complex 5 (AP-5) a tetramer composed of AP5B1, AP5M1, AP5S1 and AP5Z1. Interacts with ZFYVE26 and SPG11.

The protein resides in the cytoplasm. It localises to the cytosol. It is found in the late endosome membrane. Its subcellular location is the lysosome membrane. As part of AP-5, a probable fifth adaptor protein complex it may be involved in endosomal transport. This chain is AP-5 complex subunit sigma-1 (Ap5s1), found in Mus musculus (Mouse).